The following is a 118-amino-acid chain: Large ribosomal subunit protein bL20 (118 aa).

It belongs to the bacterial ribosomal protein bL20 family.

Binds directly to 23S ribosomal RNA and is necessary for the in vitro assembly process of the 50S ribosomal subunit. It is not involved in the protein synthesizing functions of that subunit. This Pseudomonas fluorescens (strain SBW25) protein is Large ribosomal subunit protein bL20.